A 134-amino-acid polypeptide reads, in one-letter code: Small ribosomal subunit protein uS9 (134 aa).

The interval 109-134 (DARRTEPHKPSKSSKGPRARRQKSYR) is disordered. Residues 118 to 134 (PSKSSKGPRARRQKSYR) are compositionally biased toward basic residues.

It belongs to the universal ribosomal protein uS9 family.

This Methanococcus vannielii (strain ATCC 35089 / DSM 1224 / JCM 13029 / OCM 148 / SB) protein is Small ribosomal subunit protein uS9.